We begin with the raw amino-acid sequence, 590 residues long: MYTEESLDNLRHSIDIVDVLSEHIHLKRSGATYKACCPFHTEKTPSFIVNPAGAHYHCFGCGAHGDAIGFLMQHLGYSFTEAILVLSKKFQVDLVLQPKDSGYTPPQGLKEELRHINSEAETFFRYCLYHLPEARHALQYLYHRGFSPDTIDRFHLGYGPEQSLFLQAMEERKISQEQLHTAGFFGNKWFLFARRIIFPVHDALGHTIGFSARKFLENSQGGKYVNTPETPIFKKSRILFGLNFSRRRIAKEKKVILVEGQADCLQMIDSGFNCTVAAQGTAFTEEHVKELSKLGVLKVFLLFDSDEAGNKAALRVGDLCQTAQMSVFVCKLPQGHDPDSFLMQRGSSGLIALLEQSQDYLTFLISEKMSSYPKFGPREKALLVEEAIRQIKHWGSPILVYEHLKQLASLMMVPEDMVLSLANPQVTAEPQNIPIKQKVPKIHPHIVMETDILRCMLFCGSNTKILYTAQFYFVPEDFKHPECRKLFAFMISYYEKYRKNVPFDEACQVLSDSQILQLLTKRRLNTEALDTIFVQSLQKMADRRWREQCKPLSLNQNIQDKKLEILEDYVQLRKDRTIITLLDPESELIP.

The segment at 37-61 (CPFHTEKTPSFIVNPAGAHYHCFGC) adopts a CHC2-type zinc-finger fold. Positions 253–333 (KKVILVEGQA…QMSVFVCKLP (81 aa)) constitute a Toprim domain. E259, D304, and D306 together coordinate Mg(2+).

The protein belongs to the DnaG primase family. As to quaternary structure, monomer. Interacts with DnaB. The cofactor is Zn(2+). Mg(2+) is required as a cofactor.

It catalyses the reaction ssDNA + n NTP = ssDNA/pppN(pN)n-1 hybrid + (n-1) diphosphate.. In terms of biological role, RNA polymerase that catalyzes the synthesis of short RNA molecules used as primers for DNA polymerase during DNA replication. The protein is DNA primase of Chlamydia pneumoniae (Chlamydophila pneumoniae).